The following is a 530-amino-acid chain: Nectin-2 (530 aa).

An N-terminal signal peptide occupies residues 1 to 31; it reads MARAAVLPPSRLSPTLPLLPLLLLLLQETGA. Residues 32 to 147 enclose the Ig-like V-type domain; the sequence is QDVRVRVLPE…NGTRRGVTWL (116 aa). At 32–351 the chain is on the extracellular side; that stretch reads QDVRVRVLPE…STAGAGATGG (320 aa). A disulfide bridge connects residues Cys54 and Cys131. Residues Asn128 and Asn138 are each glycosylated (N-linked (GlcNAc...) asparagine). Ig-like C2-type domains are found at residues 153–247 and 252–337; these read PENH…VTLS and PEVS…VILV. Cystine bridges form between Cys174-Cys229 and Cys274-Cys320. N-linked (GlcNAc...) asparagine glycosylation occurs at Asn315. Residues 352–372 traverse the membrane as a helical segment; sequence IIGGIIAAIIATAVAGTGILI. The Cytoplasmic segment spans residues 373-530; the sequence is CRQQRKEQRL…DFFVSRAMYV (158 aa). The tract at residues 382 to 407 is disordered; sequence LQAADEEEELEGPPSYKPPTPKAKLE. Thr401 bears the Phosphothreonine mark. Ser424 is modified (phosphoserine).

It belongs to the nectin family. As to quaternary structure, can form trans-heterodimers with NECTIN3. Interacts with CD226 or with PVRIG; these interactions are competitive and have a differential functional outcome on T-cell activation, either positive or negative, respectively. Binds with low affinity to TIGIT. Brain, spinal cord, spleen, kidney, heart and liver.

The protein resides in the cell membrane. Modulator of T-cell signaling. Can be either a costimulator of T-cell function, or a coinhibitor, depending on the receptor it binds to. Upon binding to CD226, stimulates T-cell proliferation and cytokine production, including that of IL2, IL5, IL10, IL13, and IFNG. Upon interaction with PVRIG, inhibits T-cell proliferation. These interactions are competitive. Probable cell adhesion protein. The chain is Nectin-2 from Mus musculus (Mouse).